The following is a 418-amino-acid chain: uncharacterized protein (418 aa).

Residues 282–297 (EEHSSIAKLDSEEKIR) show a composition bias toward basic and acidic residues. Residues 282-346 (EEHSSIAKLD…SASVDDVSEE (65 aa)) are disordered. The segment covering 304 to 316 (SSTSLSPDPTSDN) has biased composition (low complexity). The segment covering 322 to 337 (WVSSQDTSKNSSNLAS) has biased composition (polar residues).

This is an uncharacterized protein from Schizosaccharomyces pombe (strain 972 / ATCC 24843) (Fission yeast).